The primary structure comprises 180 residues: Inner membrane-spanning protein YciB (180 aa).

The next 5 membrane-spanning stretches (helical) occupy residues 25 to 45, 49 to 69, 76 to 96, 118 to 138, and 150 to 170; these read QNAT…CYII, VSKL…ITLI, IKIK…MSGI, IILS…NEVV, and FKVF…LPLL.

It belongs to the YciB family.

The protein resides in the cell inner membrane. Plays a role in cell envelope biogenesis, maintenance of cell envelope integrity and membrane homeostasis. The polypeptide is Inner membrane-spanning protein YciB (Rickettsia prowazekii (strain Madrid E)).